The chain runs to 131 residues: Hydrogenase maturation factor HypA (131 aa).

Residue H2 coordinates Ni(2+). 4 residues coordinate Zn(2+): C73, C76, C105, and C108.

The protein belongs to the HypA/HybF family.

In terms of biological role, involved in the maturation of [NiFe] hydrogenases. Required for nickel insertion into the metal center of the hydrogenase. The sequence is that of Hydrogenase maturation factor HypA from Thermomicrobium roseum (strain ATCC 27502 / DSM 5159 / P-2).